The sequence spans 416 residues: D-amino acid dehydrogenase (416 aa).

An FAD-binding site is contributed by 3–17; that stretch reads ITILGSGVIGVTTAY.

This sequence belongs to the DadA oxidoreductase family. Requires FAD as cofactor.

It carries out the reaction a D-alpha-amino acid + A + H2O = a 2-oxocarboxylate + AH2 + NH4(+). It functions in the pathway amino-acid degradation; D-alanine degradation; NH(3) and pyruvate from D-alanine: step 1/1. Oxidative deamination of D-amino acids. This is D-amino acid dehydrogenase from Brucella anthropi (strain ATCC 49188 / DSM 6882 / CCUG 24695 / JCM 21032 / LMG 3331 / NBRC 15819 / NCTC 12168 / Alc 37) (Ochrobactrum anthropi).